The chain runs to 493 residues: GTPase Der (493 aa).

Positions 3–166 (PVIALVGRPN…EALGIFPKDN (164 aa)) constitute an EngA-type G 1 domain. GTP-binding positions include 9–16 (GRPNVGKS), 56–60 (DTGGI), and 118–121 (NKVD). Positions 166 to 195 (NAEEEGEGEPASEEVAEGEEPTRIPGPSEK) are disordered. Acidic residues predominate over residues 167 to 184 (AEEEGEGEPASEEVAEGE). The 174-residue stretch at 198 to 371 (IKIAIIGRPN…SVQESFRSAV (174 aa)) folds into the EngA-type G 2 domain. GTP is bound by residues 204 to 211 (GRPNVGKS), 251 to 255 (DTAGV), and 316 to 319 (NKWD). Residues 372-456 (TRWPTSRLTS…PIRIEYKGGE (85 aa)) enclose the KH-like domain. Residues 454–463 (GGENPYEGKK) are compositionally biased toward basic and acidic residues. The tract at residues 454 to 493 (GGENPYEGKKNSLTARQVNKKRRLMSHHKKAEKKKKDKRR) is disordered. Basic residues predominate over residues 471 to 493 (VNKKRRLMSHHKKAEKKKKDKRR).

This sequence belongs to the TRAFAC class TrmE-Era-EngA-EngB-Septin-like GTPase superfamily. EngA (Der) GTPase family. Associates with the 50S ribosomal subunit.

GTPase that plays an essential role in the late steps of ribosome biogenesis. The protein is GTPase Der of Pseudomonas aeruginosa (strain ATCC 15692 / DSM 22644 / CIP 104116 / JCM 14847 / LMG 12228 / 1C / PRS 101 / PAO1).